The chain runs to 374 residues: Pectate lyase 1 (374 aa).

The first 22 residues, 1-22, serve as a signal peptide directing secretion; it reads MKYLLPSAAAGLLLLAAQPTMA. Cysteines 93 and 176 form a disulfide. The Ca(2+) site is built by aspartate 150, aspartate 152, glutamate 187, and aspartate 191. Arginine 239 is a catalytic residue. Cysteine 350 and cysteine 373 form a disulfide bridge.

Belongs to the polysaccharide lyase 1 family. PLADES subfamily. The cofactor is Ca(2+).

The protein resides in the secreted. The catalysed reaction is Eliminative cleavage of (1-&gt;4)-alpha-D-galacturonan to give oligosaccharides with 4-deoxy-alpha-D-galact-4-enuronosyl groups at their non-reducing ends.. The protein operates within glycan metabolism; pectin degradation; 2-dehydro-3-deoxy-D-gluconate from pectin: step 2/5. Involved in maceration and soft-rotting of plant tissue. This is Pectate lyase 1 (pel1) from Pectobacterium carotovorum (Erwinia carotovora).